A 188-amino-acid chain; its full sequence is Ion-translocating oxidoreductase complex subunit B (188 aa).

The hydrophobic stretch occupies residues methionine 1–alanine 26. The 4Fe-4S domain maps to glutamine 32–leucine 90. Cysteine 49, cysteine 52, cysteine 57, cysteine 73, cysteine 113, cysteine 116, cysteine 119, cysteine 123, cysteine 143, cysteine 146, cysteine 149, and cysteine 153 together coordinate [4Fe-4S] cluster. 4Fe-4S ferredoxin-type domains lie at arginine 104–arginine 133 and leucine 134–isoleucine 163.

It belongs to the 4Fe4S bacterial-type ferredoxin family. RnfB subfamily. The complex is composed of six subunits: RnfA, RnfB, RnfC, RnfD, RnfE and RnfG. The cofactor is [4Fe-4S] cluster.

The protein resides in the cell inner membrane. Its function is as follows. Part of a membrane-bound complex that couples electron transfer with translocation of ions across the membrane. This chain is Ion-translocating oxidoreductase complex subunit B, found in Pseudomonas aeruginosa (strain LESB58).